The sequence spans 216 residues: SPbeta prophage-derived uncharacterized protein YomX (216 aa).

The polypeptide is SPbeta prophage-derived uncharacterized protein YomX (yomX) (Bacillus subtilis (strain 168)).